The following is a 139-amino-acid chain: Pre-hexon-linking protein VIII (139 aa).

Positions glycine 35 to glycine 69 are excised as a propeptide.

This sequence belongs to the adenoviridae hexon-linking protein family. As to quaternary structure, interacts with the peripentonal hexons as well as the hexons in the facets. Part of a complex composed of the core-capsid bridging protein, the endosome lysis protein VI and the hexon-linking protein VIII; these interactions bridge the virus core to the capsid. Post-translationally, cleaved by the viral protease during virion maturation. May cause the middle segment to be shed from the capsid.

The protein localises to the host nucleus. It localises to the virion. Its function is as follows. Structural component of the virion that acts as a cement protein on the capsid interior and which glue the peripentonal hexons and group-of-nine hexons together. In Bovine adenovirus B serotype 3 (BAdV-3), this protein is Pre-hexon-linking protein VIII.